The sequence spans 702 residues: 1,4-alpha-glucan-branching enzyme (702 aa).

The residue at position 2 (Ala2) is an N-acetylalanine. Substrate-binding positions include 62–63 (NE) and 91–93 (WAP). Residue Trp107 participates in (1,4-alpha-D-glucosyl)n binding. Residue 118-121 (EYGK) coordinates substrate. Position 143 (Lys143) interacts with (1,4-alpha-D-glucosyl)n. Tyr173 is modified (phosphotyrosine). Residue 333-336 (EVLR) coordinates substrate. Asp357 serves as the catalytic Nucleophile. The active-site Proton donor is the Glu412.

This sequence belongs to the glycosyl hydrolase 13 family. GlgB subfamily. In terms of assembly, monomer.

It catalyses the reaction Transfers a segment of a (1-&gt;4)-alpha-D-glucan chain to a primary hydroxy group in a similar glucan chain.. It participates in glycan biosynthesis; glycogen biosynthesis. Its function is as follows. Glycogen-branching enzyme participates in the glycogen biosynthetic process along with glycogenin and glycogen synthase. Generates alpha-1,6-glucosidic branches from alpha-1,4-linked glucose chains, to increase solubility of the glycogen polymer. This is 1,4-alpha-glucan-branching enzyme (Gbe1) from Mus musculus (Mouse).